The primary structure comprises 173 residues: MDIAIQHPWFKRALGPFYPSRLFDQFFGEGLFEYDLLPFLSSTISPYYRQSLFRTVLDSGISEVRSDRDKFVIFLDVKHFSPEDLTVKVQEDFVEIHGKHNERQDDHGYISREFHRRYRLPSNVDQSALSCSLSADGMLTFSGPKVPSGMDAGHSERAIPVSREEKPSSAPSS.

An N-acetylmethionine modification is found at Met-1. Residues 1–63 (MDIAIQHPWF…RTVLDSGISE (63 aa)) are required for complex formation with BFSP1 and BFSP2. Gln-6 carries the post-translational modification Deamidated glutamine; partial. Ser-45 bears the Phosphoserine mark. Gln-50 carries the deamidated glutamine; partial modification. Positions 52 to 162 (LFRTVLDSGI…GHSERAIPVS (111 aa)) constitute a sHSP domain. At Lys-70 the chain carries N6-acetyllysine. Gln-90 carries the deamidated glutamine; partial modification. The residue at position 99 (Lys-99) is an N6-acetyllysine. His-100 contacts Zn(2+). Asn-101 carries the post-translational modification Deamidated asparagine; partial. The Zn(2+) site is built by Glu-102 and His-107. Ser-122 carries the phosphoserine modification. Asn-123 is modified (deamidated asparagine; partial). The tract at residues 144–173 (PKVPSGMDAGHSERAIPVSREEKPSSAPSS) is disordered. Residues 153–167 (GHSERAIPVSREEKP) are compositionally biased toward basic and acidic residues. Zn(2+) is bound at residue His-154. An O-linked (GlcNAc) serine glycan is attached at Ser-162.

The protein belongs to the small heat shock protein (HSP20) family. As to quaternary structure, heteromer composed of three CRYAA and one CRYAB subunits. Inter-subunit bridging via zinc ions enhances stability, which is crucial as there is no protein turn over in the lens. Can also form homodimers and homotetramers (dimers of dimers) which serve as the building blocks of homooligomers. Within homooligomers, the zinc-binding motif is created from residues of 3 different molecules. His-100 and Glu-102 from one molecule are ligands of the zinc ion, and His-107 and His-154 residues from additional molecules complete the site with tetrahedral coordination geometry. Part of a complex required for lens intermediate filament formation composed of BFSP1, BFSP2 and CRYAA. Acetylation at Lys-70 may increase chaperone activity. In terms of processing, undergoes age-dependent proteolytical cleavage at the C-terminus.

The protein resides in the cytoplasm. It localises to the nucleus. Contributes to the transparency and refractive index of the lens. Acts as a chaperone, preventing aggregation of various proteins under a wide range of stress conditions. Required for the correct formation of lens intermediate filaments as part of a complex composed of BFSP1, BFSP2 and CRYAA. The chain is Alpha-crystallin A chain (CRYAA) from Balaenoptera acutorostrata (Common minke whale).